We begin with the raw amino-acid sequence, 2094 residues long: Non-reducing polyketide synthase ustP (2094 aa).

The interval 9 to 243 (VFGDLSVPYH…GKIQVGGLFH (235 aa)) is N-terminal acylcarrier protein transacylase (SAT) domain. Residues 357-377 (NTAGVDSSSRGSGHADAEKQP) form a disordered region. In terms of domain architecture, Ketosynthase family 3 (KS3) spans 379–813 (RSKIAIIGFS…GGNSSVLVED (435 aa)). Catalysis depends on for beta-ketoacyl synthase activity residues C551, H686, and H727. The segment at 914-1227 (FSFTGQGSQY…EDDCKIFTPA (314 aa)) is malonyl-CoA:ACP transacylase (MAT) domain. S1004 serves as the catalytic For acyl/malonyl transferase activity. The interval 1305–1629 (TTSVQYITAE…QRKVLDLVLP (325 aa)) is product template (PT) domain. The segment at 1308-1445 (VQYITAESYG…CSGFFTDKSR (138 aa)) is N-terminal hotdog fold. One can recognise a PKS/mFAS DH domain in the interval 1308 to 1625 (VQYITAESYG…FAAVQRKVLD (318 aa)). H1341 functions as the Proton acceptor; for dehydratase activity in the catalytic mechanism. Residues 1473–1625 (GSVHMIKTGM…FAAVQRKVLD (153 aa)) form a C-terminal hotdog fold region. D1536 functions as the Proton donor; for dehydratase activity in the catalytic mechanism. Residues 1644 to 1671 (AAAAPSQRQQQQQQQQQQQPAQPVAASQ) are compositionally biased toward low complexity. Positions 1644 to 1689 (AAAAPSQRQQQQQQQQQQQPAQPVAASQESGMDDMPPTLVPSEKKD) are disordered. Residues 1689-1763 (DVPSEKLKVI…ELVRHILGSS (75 aa)) form the Carrier domain. O-(pantetheine 4'-phosphoryl)serine is present on S1723. Residues 1762–1778 (SSTPSSDSGPATPSITP) are compositionally biased toward polar residues. The interval 1762 to 1782 (SSTPSSDSGPATPSITPLQEP) is disordered. Positions 1844–2069 (KVWLFPDGSG…GVVEGAHHFS (226 aa)) are claisen cyclase domain. Residue S1916 is the For Claisen cyclase activity of the active site.

It carries out the reaction 6 malonyl-CoA + acetyl-CoA + 6 H(+) = naphtopyrone YWA1 + 6 CO2 + 7 CoA + H2O. It functions in the pathway secondary metabolite biosynthesis. Non-reducing polyketide synthase; part of the gene cluster that mediates the biosynthesis of ustilaginoidins, dimeric gamma-naphthopyrones isolated from different fungal species. The first step in the biosynthesis of ustilaginoidins is the production of gamma-naphthopyrone precursor YWA1 by the non-reducing polyketide synthase ustP, via condensation of one acetyl-CoA starter unit with 6 malonyl-CoA units. YWA1 is then probably substrate of the ustZ to yield norrubrofusarin via a dehydration reaction. A key enzyme in the biosynthetic pathway is the laccase ustL, which catalyzes the oxidative dimerization of norrubrofusarin to ustilaginoidin A. It can produce the M- and P-atropisomers in varying amounts, depending on the reaction conditions. For the biosynthesis of 3-methylustilaginoid in derivatives such as chaetochromin A, a methylated derivative of YWA1 is required. The C-methylation is considered to be catalyzed by ustM, the phosphopantetheine attachment site of which indicates that it acts on the growing polyketide chain before release of the product. For the biosynthesis of chaetochromin A, it is assumed that saturation of the D2 double bond takes place before dimerization, and is probably catalyzed by an external reductase because no candidate gene was identified within the cluster. The polypeptide is Non-reducing polyketide synthase ustP (Ustilaginoidea virens (Rice false smut fungus)).